Consider the following 557-residue polypeptide: Alpha-barbatene synthase (557 aa).

The (2E,6E)-farnesyl diphosphate site is built by Arg273, Asp310, Asp314, Arg451, and Asp454. Asp310 and Asp314 together coordinate Mg(2+). Residues Asp310–Asp314 carry the DDXXD motif motif. Asp454, Asp455, and Asp462 together coordinate Mg(2+).

It belongs to the terpene synthase family. Tpsa subfamily. Monomer. Mg(2+) is required as a cofactor. The cofactor is Mn(2+). As to expression, expressed exclusively in flowers. Expressed in intrafloral nectaries and in the funiculus within the ovules.

It is found in the cytoplasm. The enzyme catalyses (2E,6E)-farnesyl diphosphate = (+)-alpha-barbatene + diphosphate. It catalyses the reaction (2E,6E)-farnesyl diphosphate = (+)-thujopsene + diphosphate. It carries out the reaction (2E,6E)-farnesyl diphosphate = (+)-beta-chamigrene + diphosphate. The catalysed reaction is (2E,6E)-farnesyl diphosphate = (+)-beta-barbatene + diphosphate. The enzyme catalyses (2E,6E)-farnesyl diphosphate = beta-sesquiphellandrene + diphosphate. It catalyses the reaction (2E,6E)-farnesyl diphosphate = (S)-beta-bisabolene + diphosphate. It carries out the reaction (2E,6E)-farnesyl diphosphate = (-)-alpha-cuprenene + diphosphate. The catalysed reaction is (2E,6E)-farnesyl diphosphate = alpha-zingiberene + diphosphate. The enzyme catalyses (2E,6E)-farnesyl diphosphate = beta-acoradiene + diphosphate. It catalyses the reaction (2E,6E)-farnesyl diphosphate = (E)-beta-farnesene + diphosphate. It functions in the pathway secondary metabolite biosynthesis; terpenoid biosynthesis. In terms of biological role, involved in the biosynthesis of over 15 sesquiterpenes (C15). The major products are (+)-alpha-barbatene (27.3%), (+)-thujopsene (17.8%) and (+)-beta-chamigrene (9.9%). Can use farnesyl diphosphate or geranyl diphosphate as substrates, but not geranylgeranyl diphosphate. The protein is Alpha-barbatene synthase of Arabidopsis thaliana (Mouse-ear cress).